A 706-amino-acid chain; its full sequence is Elongation factor G (706 aa).

The tr-type G domain maps to 8 to 290; it reads NRYRNIGICA…AVIDYLPAPT (283 aa). GTP is bound by residues 17 to 24, 88 to 92, and 142 to 145; these read AHVDAGKT, DTPGH, and NKMD.

The protein belongs to the TRAFAC class translation factor GTPase superfamily. Classic translation factor GTPase family. EF-G/EF-2 subfamily.

The protein resides in the cytoplasm. Functionally, catalyzes the GTP-dependent ribosomal translocation step during translation elongation. During this step, the ribosome changes from the pre-translocational (PRE) to the post-translocational (POST) state as the newly formed A-site-bound peptidyl-tRNA and P-site-bound deacylated tRNA move to the P and E sites, respectively. Catalyzes the coordinated movement of the two tRNA molecules, the mRNA and conformational changes in the ribosome. This chain is Elongation factor G, found in Stutzerimonas stutzeri (strain A1501) (Pseudomonas stutzeri).